The chain runs to 615 residues: UvrABC system protein C (615 aa).

Residues 12-91 (EKPGVYIMKD…IKKYKPKYNV (80 aa)) form the GIY-YIG domain. One can recognise a UVR domain in the interval 203–238 (DWLIQKLKEDMKKAAEELRFEEAARIRDQIFAIERT).

The protein belongs to the UvrC family. In terms of assembly, interacts with UvrB in an incision complex.

It localises to the cytoplasm. Functionally, the UvrABC repair system catalyzes the recognition and processing of DNA lesions. UvrC both incises the 5' and 3' sides of the lesion. The N-terminal half is responsible for the 3' incision and the C-terminal half is responsible for the 5' incision. The sequence is that of UvrABC system protein C from Thermoanaerobacter sp. (strain X514).